Consider the following 137-residue polypeptide: Nucleoside diphosphate kinase (137 aa).

Residues Lys9, Phe57, Arg85, Thr91, Arg102, and Asn112 each coordinate ATP. The active-site Pros-phosphohistidine intermediate is the His115.

It belongs to the NDK family. As to quaternary structure, homotetramer. The cofactor is Mg(2+).

The protein localises to the cytoplasm. The catalysed reaction is a 2'-deoxyribonucleoside 5'-diphosphate + ATP = a 2'-deoxyribonucleoside 5'-triphosphate + ADP. It carries out the reaction a ribonucleoside 5'-diphosphate + ATP = a ribonucleoside 5'-triphosphate + ADP. Functionally, major role in the synthesis of nucleoside triphosphates other than ATP. The ATP gamma phosphate is transferred to the NDP beta phosphate via a ping-pong mechanism, using a phosphorylated active-site intermediate. The polypeptide is Nucleoside diphosphate kinase (Campylobacter curvus (strain 525.92)).